A 160-amino-acid chain; its full sequence is S-ribosylhomocysteine lyase (160 aa).

Fe cation-binding residues include H57, H61, and C127.

The protein belongs to the LuxS family. As to quaternary structure, homodimer. It depends on Fe cation as a cofactor.

The catalysed reaction is S-(5-deoxy-D-ribos-5-yl)-L-homocysteine = (S)-4,5-dihydroxypentane-2,3-dione + L-homocysteine. Its function is as follows. Involved in the synthesis of autoinducer 2 (AI-2) which is secreted by bacteria and is used to communicate both the cell density and the metabolic potential of the environment. The regulation of gene expression in response to changes in cell density is called quorum sensing. Catalyzes the transformation of S-ribosylhomocysteine (RHC) to homocysteine (HC) and 4,5-dihydroxy-2,3-pentadione (DPD). The protein is S-ribosylhomocysteine lyase of Streptococcus gordonii (strain Challis / ATCC 35105 / BCRC 15272 / CH1 / DL1 / V288).